The chain runs to 50 residues: Large ribosomal subunit protein bL33 (50 aa).

This sequence belongs to the bacterial ribosomal protein bL33 family.

In Fusobacterium nucleatum subsp. nucleatum (strain ATCC 25586 / DSM 15643 / BCRC 10681 / CIP 101130 / JCM 8532 / KCTC 2640 / LMG 13131 / VPI 4355), this protein is Large ribosomal subunit protein bL33.